The following is a 335-amino-acid chain: Cytoskeleton protein RodZ (335 aa).

Residues 1–111 (MNTEATHDQN…LGKRRKKRDG (111 aa)) are Cytoplasmic-facing. Residues 19 to 71 (LRNAREQLGLSQQAVAERLCLKVSTVRDIEEDKAPADLASTFLRGYIRSYARL) form the HTH cro/C1-type domain. Residues 30–49 (QQAVAERLCLKVSTVRDIEE) constitute a DNA-binding region (H-T-H motif). The helical; Signal-anchor for type II membrane protein transmembrane segment at 112–132 (WLMTFTWLVLFVVIGLSGAWW) threads the bilayer. The Periplasmic segment spans residues 133–335 (WQDHKAQQEE…TLNAEQSPAQ (203 aa)). Residues 148-164 (DQSSAELNNNQSQSVPL) show a composition bias toward polar residues. The interval 148 to 244 (DQSSAELNNN…PLPTDQAGVT (97 aa)) is disordered. Low complexity-rich tracts occupy residues 165-205 (DTST…DPQQ) and 217-239 (DTAATPAPAATTTPDSAAPLPTD).

It belongs to the RodZ family.

The protein localises to the cell inner membrane. Functionally, cytoskeletal protein that is involved in cell-shape control through regulation of the length of the long axis. The chain is Cytoskeleton protein RodZ from Escherichia coli O81 (strain ED1a).